We begin with the raw amino-acid sequence, 58 residues long: Large ribosomal subunit protein uL30 (58 aa).

The protein belongs to the universal ribosomal protein uL30 family. Part of the 50S ribosomal subunit.

The polypeptide is Large ribosomal subunit protein uL30 (Pseudomonas aeruginosa (strain LESB58)).